The primary structure comprises 1728 residues: Lysophospholipase NTE1 (1728 aa).

Topologically, residues 1–44 (MDSSSIAHESDIVSTERNILPERFISNKQQGNYLEDGSGDGNGK) are cytoplasmic. The helical transmembrane segment at 45-65 (AAEHWLLAAIFNFFWVISYFI) threads the bilayer. Residues 66-97 (SGSTHIAFRSSWYIVSLLLLKFPKWIIVEANH) are Lumenal-facing. The helical transmembrane segment at 98-118 (IHLTIPFSVLVVTLAIIFYVS) threads the bilayer. The Cytoplasmic portion of the chain corresponds to 119–1728 (YEFLKGRLLS…GFFLHRRNSI (1610 aa)). Residues 141 to 150 (SLNSKNSKSS) are compositionally biased toward low complexity. Disordered stretches follow at residues 141 to 167 (SLNSKNSKSSRLLHHDSKDSNTTRRRR), 285 to 368 (RKKK…DEST), 406 to 436 (NDNVTSPSRTGRMDSNYTNPVERPTSKLSTS), 454 to 488 (TEASYRSTSNPSNNFSKDNDPLSKSISGPDAVTTP), 596 to 660 (NLQK…TGSR), and 687 to 756 (ASPS…FTSF). Over residues 153 to 162 (LHHDSKDSNT) the composition is skewed to basic and acidic residues. Composition is skewed to polar residues over residues 293 to 303 (SRHGQYNNNSD) and 326 to 336 (MRSSSRNQNIP). Residues 345–367 (SSDEESDINDGDSESQSESDDES) show a composition bias toward acidic residues. Composition is skewed to polar residues over residues 406-424 (NDNVTSPSRTGRMDSNYTN), 454-479 (TEASYRSTSNPSNNFSKDNDPLSKSI), and 599-609 (KGFQSPTSSRL). A compositionally biased stretch (low complexity) spans 610-628 (TSNFNGNSNNQRTNSRNSQ). 2 stretches are compositionally biased toward polar residues: residues 642 to 657 (ELSQQSSMIHSPTPIT) and 729 to 756 (IYNNQSSSRSDALKGNNSNNKDINFTSF). Residues 854–987 (SPTL…LTSL) and 983–1121 (SLTS…VAKK) contribute to the a nucleoside 3',5'-cyclic phosphate site. A disordered region spans residues 1034 to 1055 (PELEENSTDYPNDGEEKDSSRD). Residues 1036–1049 (LEENSTDYPNDGEE) show a composition bias toward acidic residues. The PNPLA domain maps to 1422–1586 (LVLGGGGARG…VDNLPVLEMK (165 aa)). Positions 1426 to 1431 (GGGARG) match the GXGXXG motif. The short motif at 1453–1457 (GTSIG) is the GXSXG element. The active-site Nucleophile is serine 1455. The active-site Proton acceptor is the aspartate 1573. Residues 1573-1575 (DGG) carry the DGA/G motif.

This sequence belongs to the NTE family.

It localises to the endoplasmic reticulum membrane. The enzyme catalyses a 1-acyl-sn-glycero-3-phosphocholine + H2O = sn-glycerol 3-phosphocholine + a fatty acid + H(+). Its activity is regulated as follows. Inhibited by organophosphorus esters. Functionally, intracellular phospholipase B that catalyzes the double deacylation of phosphatidylcholine (PC) to glycerophosphocholine (GroPCho). Plays an important role in membrane lipid homeostasis. Responsible for the rapid PC turnover in response to inositol, elevated temperatures, or when choline is present in the growth medium. This is Lysophospholipase NTE1 (NTE1) from Candida glabrata (strain ATCC 2001 / BCRC 20586 / JCM 3761 / NBRC 0622 / NRRL Y-65 / CBS 138) (Yeast).